The sequence spans 202 residues: ATP-dependent Clp protease proteolytic subunit (202 aa).

The active-site Nucleophile is the Ser-106. Residue His-131 is part of the active site.

The protein belongs to the peptidase S14 family. As to quaternary structure, fourteen ClpP subunits assemble into 2 heptameric rings which stack back to back to give a disk-like structure with a central cavity, resembling the structure of eukaryotic proteasomes.

It localises to the cytoplasm. The catalysed reaction is Hydrolysis of proteins to small peptides in the presence of ATP and magnesium. alpha-casein is the usual test substrate. In the absence of ATP, only oligopeptides shorter than five residues are hydrolyzed (such as succinyl-Leu-Tyr-|-NHMec, and Leu-Tyr-Leu-|-Tyr-Trp, in which cleavage of the -Tyr-|-Leu- and -Tyr-|-Trp bonds also occurs).. Functionally, cleaves peptides in various proteins in a process that requires ATP hydrolysis. Has a chymotrypsin-like activity. Plays a major role in the degradation of misfolded proteins. The sequence is that of ATP-dependent Clp protease proteolytic subunit from Acidovorax ebreus (strain TPSY) (Diaphorobacter sp. (strain TPSY)).